Reading from the N-terminus, the 341-residue chain is MKALSKLKAEEGIWMTDVPVPELGHNDLLIKIRKTAICGTDVHIYNWDEWSQKTIPVPMVVGHEYVGEVVGIGQEVKGFKIGDRVSGEGHITCGHCRNCRGGRTHLCRNTIGVGVNRPGCFAEYLVIPAFNAFKIPDNISDDLASIFDPFGNAVHTALSFDLVGEDVLVSGAGPIGIMAAAVAKHVGARNVVITDVNEYRLELARKMGITRAVNVAKENLNDVMTELGMTEGFDVGLEMSGAPPAFRTMLDTMNHGGRIAMLGIPPSDMSIDWTKVIFKGLFIKGIYGREMFETWYKMAALIQSGLDLSPIITHRFSIDDFQKGFDAMRSGQSGKVILSWD.

C38 serves as a coordination point for Zn(2+). Active-site charge relay system residues include T40 and H43. Residues H63, E64, C93, C96, C99, and C107 each coordinate Zn(2+). Residues I175, D195, R200, L262 to I264, and I286 to Y287 contribute to the NAD(+) site.

It belongs to the zinc-containing alcohol dehydrogenase family. As to quaternary structure, homotetramer. Zn(2+) serves as cofactor.

It is found in the cytoplasm. The enzyme catalyses L-threonine + NAD(+) = (2S)-2-amino-3-oxobutanoate + NADH + H(+). Its pathway is amino-acid degradation; L-threonine degradation via oxydo-reductase pathway; glycine from L-threonine: step 1/2. Functionally, catalyzes the NAD(+)-dependent oxidation of L-threonine to 2-amino-3-ketobutyrate. In Escherichia coli O127:H6 (strain E2348/69 / EPEC), this protein is L-threonine 3-dehydrogenase.